We begin with the raw amino-acid sequence, 181 residues long: Transcription factor bHLH167 (181 aa).

A disordered region spans residues 1–22 (MGRAREIGEGNSSSLREQRNLR). Residues 14–63 (SLREQRNLREKDRRMRMKHLFSILSSHVSPTRKLPVPHLIDQATSYMIQL) enclose the bHLH domain.

The protein belongs to the bHLH protein family.

It localises to the nucleus. This Arabidopsis thaliana (Mouse-ear cress) protein is Transcription factor bHLH167.